A 128-amino-acid chain; its full sequence is Small ribosomal subunit protein bS16 (128 aa).

Residues 107 to 128 form a disordered region; that stretch reads AAEAKAAAANESDDSGTDSTES. A compositionally biased stretch (acidic residues) spans 117-128; that stretch reads ESDDSGTDSTES.

The protein belongs to the bacterial ribosomal protein bS16 family.

The protein is Small ribosomal subunit protein bS16 of Synechococcus sp. (strain CC9311).